Reading from the N-terminus, the 259-residue chain is Protein TILLER ANGLE CONTROL 1 (259 aa).

Positions 56–62 (GILAIGT) match the IGT motif motif. 3 disordered regions span residues 96–123 (EEKA…AKMH), 206–226 (SCME…PLKA), and 239–259 (GKKI…PVTA). The segment covering 109-119 (APSEPASALEP) has biased composition (low complexity).

This sequence belongs to the TAC family. Expressed in the basal part of seedlings.

In terms of biological role, involved in the regulation of tiller growth angle. Promotes horizontal shoot growth. TAC1 and LAZY1 play opposite functions in the regulation of tiller growth angle. This chain is Protein TILLER ANGLE CONTROL 1, found in Oryza sativa subsp. indica (Rice).